Consider the following 188-residue polypeptide: Peptide deformylase (188 aa).

Fe cation-binding residues include cysteine 107 and histidine 149. Glutamate 150 is a catalytic residue. Histidine 153 lines the Fe cation pocket.

Belongs to the polypeptide deformylase family. It depends on Fe(2+) as a cofactor.

It carries out the reaction N-terminal N-formyl-L-methionyl-[peptide] + H2O = N-terminal L-methionyl-[peptide] + formate. In terms of biological role, removes the formyl group from the N-terminal Met of newly synthesized proteins. Requires at least a dipeptide for an efficient rate of reaction. N-terminal L-methionine is a prerequisite for activity but the enzyme has broad specificity at other positions. The protein is Peptide deformylase of Thermosynechococcus vestitus (strain NIES-2133 / IAM M-273 / BP-1).